We begin with the raw amino-acid sequence, 335 residues long: Anthranilate phosphoribosyltransferase (335 aa).

Residues Gly80, 83-84, Thr88, 90-93, 108-116, and Ser120 each bind 5-phospho-alpha-D-ribose 1-diphosphate; these read GD, NIST, and KHGNRAVSS. Gly80 contacts anthranilate. Ser92 is a binding site for Mg(2+). Asn111 serves as a coordination point for anthranilate. Anthranilate is bound at residue Arg166. Positions 225 and 226 each coordinate Mg(2+).

The protein belongs to the anthranilate phosphoribosyltransferase family. As to quaternary structure, homodimer. It depends on Mg(2+) as a cofactor.

The catalysed reaction is N-(5-phospho-beta-D-ribosyl)anthranilate + diphosphate = 5-phospho-alpha-D-ribose 1-diphosphate + anthranilate. Its pathway is amino-acid biosynthesis; L-tryptophan biosynthesis; L-tryptophan from chorismate: step 2/5. In terms of biological role, catalyzes the transfer of the phosphoribosyl group of 5-phosphorylribose-1-pyrophosphate (PRPP) to anthranilate to yield N-(5'-phosphoribosyl)-anthranilate (PRA). This Clostridium kluyveri (strain NBRC 12016) protein is Anthranilate phosphoribosyltransferase.